Reading from the N-terminus, the 393-residue chain is Ceramide synthase 4 (393 aa).

Over 1–31 the chain is Lumenal; it reads MWSSLNDWLWNERLWLPANISWAQLEDHDGL. Asn19 is a glycosylation site (N-linked (GlcNAc...) asparagine). The helical transmembrane segment at 32-52 threads the bilayer; sequence VFPHPQDTLMAVPLALALVVV. The homeobox-like stretch occupies residues 67–128; that stretch reads WLGVRNQIRR…RRRRNQDRPC (62 aa). The TLC domain maps to 131–332; that stretch reads KKFCESSWKF…ILCMIYSFIK (202 aa). A run of 4 helical transmembrane segments spans residues 140 to 160, 179 to 199, 209 to 229, and 260 to 280; these read FVFYLCCFVCGTMVLYHESWL, LYHWYLLELSFYISLLMTLPF, QVIHHFVTIILISFSYSLNLL, and MCDTLFIIFSLVFFYTRLVLF. The Last loop motif motif lies at 291-301; sequence ESIGNFSPFFG. Residues 304–324 form a helical membrane-spanning segment; it reads FLNILLVILQLLHVFWSWLIL. Over 325–393 the chain is Cytoplasmic; the sequence is CMIYSFIKKG…RMVNRHTPAT (69 aa). Residues Ser342, Ser349, and Ser350 each carry the phosphoserine modification. A compositionally biased stretch (acidic residues) spans 346–356; the sequence is ELDSSDGEAAE. The tract at residues 346-393 is disordered; the sequence is ELDSSDGEAAEECPQMKNGAAQRPGAAPTDGPRSRAAGRMVNRHTPAT.

Phosphorylated at the C-terminus by CK2.

The protein resides in the endoplasmic reticulum membrane. The catalysed reaction is sphinganine + octadecanoyl-CoA = N-(octadecanoyl)-sphinganine + CoA + H(+). It carries out the reaction eicosanoyl-CoA + sphinganine = N-eicosanoylsphinganine + CoA + H(+). It catalyses the reaction docosanoyl-CoA + sphinganine = N-docosanoylsphinganine + CoA + H(+). The enzyme catalyses tetracosanoyl-CoA + sphinganine = N-tetracosanoylsphinganine + CoA + H(+). The catalysed reaction is hexacosanoyl-CoA + sphinganine = N-hexacosanoylsphinganine + CoA + H(+). It carries out the reaction a fatty acyl-CoA + sphing-4-enine = an N-acylsphing-4-enine + CoA + H(+). It catalyses the reaction sphing-4-enine + octadecanoyl-CoA = N-octadecanoylsphing-4-enine + CoA + H(+). The enzyme catalyses hexadecasphinganine + octadecanoyl-CoA = N-octadecanoylhexadecasphinganine + CoA + H(+). It functions in the pathway lipid metabolism; sphingolipid metabolism. In terms of biological role, ceramide synthase that catalyzes formation of ceramide from sphinganine and acyl-CoA substrates, with high selectivity toward long and very-long chains (C18:0-C22:0) as acyl donor. This is Ceramide synthase 4 from Bos taurus (Bovine).